The chain runs to 131 residues: Profilin-1 (131 aa).

It belongs to the profilin family. In terms of assembly, occurs in many kinds of cells as a complex with monomeric actin in a 1:1 ratio.

The protein localises to the cytoplasm. It localises to the cytoskeleton. Its function is as follows. Binds to actin and affects the structure of the cytoskeleton. At high concentrations, profilin prevents the polymerization of actin, whereas it enhances it at low concentrations. By binding to PIP2, it inhibits the formation of IP3 and DG. The sequence is that of Profilin-1 (PRO1) from Hordeum vulgare (Barley).